We begin with the raw amino-acid sequence, 154 residues long: Small ribosomal subunit protein bS16 (154 aa).

The disordered stretch occupies residues valine 82–alanine 154. The segment covering lysine 92 to alanine 109 has biased composition (basic and acidic residues). A compositionally biased stretch (low complexity) spans lysine 110 to proline 129. The span at proline 142–alanine 154 shows a compositional bias: acidic residues.

Belongs to the bacterial ribosomal protein bS16 family.

The polypeptide is Small ribosomal subunit protein bS16 (Rhizorhabdus wittichii (strain DSM 6014 / CCUG 31198 / JCM 15750 / NBRC 105917 / EY 4224 / RW1) (Sphingomonas wittichii)).